Consider the following 82-residue polypeptide: uncharacterized protein (82 aa).

Transmembrane regions (helical) follow at residues 22–39 (WASD…MFIA) and 46–65 (LKMG…TWVI).

It is found in the cell membrane. This is an uncharacterized protein from Bacillus subtilis (strain 168).